The chain runs to 717 residues: DNA ligase (717 aa).

NAD(+) contacts are provided by residues 41-45 (DARYD), 90-91 (SL), and Glu-124. The N6-AMP-lysine intermediate role is filled by Lys-126. NAD(+) contacts are provided by Arg-147, Glu-183, Lys-299, and Lys-323. Cys-428, Cys-431, Cys-446, and Cys-452 together coordinate Zn(2+). In terms of domain architecture, BRCT spans 636-717 (ADYSPVAGKT…WLQLINEHHI (82 aa)).

Belongs to the NAD-dependent DNA ligase family. LigA subfamily. It depends on Mg(2+) as a cofactor. Requires Mn(2+) as cofactor.

It carries out the reaction NAD(+) + (deoxyribonucleotide)n-3'-hydroxyl + 5'-phospho-(deoxyribonucleotide)m = (deoxyribonucleotide)n+m + AMP + beta-nicotinamide D-nucleotide.. Functionally, DNA ligase that catalyzes the formation of phosphodiester linkages between 5'-phosphoryl and 3'-hydroxyl groups in double-stranded DNA using NAD as a coenzyme and as the energy source for the reaction. It is essential for DNA replication and repair of damaged DNA. The chain is DNA ligase from Bartonella bacilliformis (strain ATCC 35685 / KC583 / Herrer 020/F12,63).